Consider the following 151-residue polypeptide: Lectin-like protein BA14k (151 aa).

Residues 1 to 26 (MNIFKQTCVGAFAVIFGATSIAPTMA) form the signal peptide. The chain crosses the membrane as a helical span at residues 83 to 103 (GWWYPLAAFGAGAIIGGAVSQ).

The protein belongs to the BA14k family.

The protein resides in the cell membrane. In terms of biological role, has immunoglobulin-binding and hemagglutination properties, and can bind to mannose. Essential for virulence. May be involved in LPS biosynthesis or polysaccharide transport. This chain is Lectin-like protein BA14k, found in Brucella anthropi (strain ATCC 49188 / DSM 6882 / CCUG 24695 / JCM 21032 / LMG 3331 / NBRC 15819 / NCTC 12168 / Alc 37) (Ochrobactrum anthropi).